We begin with the raw amino-acid sequence, 119 residues long: Large ribosomal subunit protein uL18 (119 aa).

Residues 1–20 (MISKPDKNKTRQKRHTRVRG) are disordered. Positions 10–20 (TRQKRHTRVRG) are enriched in basic residues.

The protein belongs to the universal ribosomal protein uL18 family. In terms of assembly, part of the 50S ribosomal subunit; part of the 5S rRNA/L5/L18/L25 subcomplex. Contacts the 5S and 23S rRNAs.

Functionally, this is one of the proteins that bind and probably mediate the attachment of the 5S RNA into the large ribosomal subunit, where it forms part of the central protuberance. The sequence is that of Large ribosomal subunit protein uL18 from Latilactobacillus sakei subsp. sakei (strain 23K) (Lactobacillus sakei subsp. sakei).